Consider the following 446-residue polypeptide: tRNA-2-methylthio-N(6)-dimethylallyladenosine synthase (446 aa).

Positions 3–120 constitute an MTTase N-terminal domain; the sequence is KKIYIKTFGC…LPEMLKQRRS (118 aa). [4Fe-4S] cluster contacts are provided by C12, C49, C83, C157, C161, and C164. The region spanning 143 to 375 is the Radical SAM core domain; it reads KVEGATAFVS…QAVIDQNTRR (233 aa). The 67-residue stretch at 378 to 444 folds into the TRAM domain; that stretch reads DEMVGSVQRI…AYTLRGEIVV (67 aa).

The protein belongs to the methylthiotransferase family. MiaB subfamily. Monomer. [4Fe-4S] cluster serves as cofactor.

It localises to the cytoplasm. It carries out the reaction N(6)-dimethylallyladenosine(37) in tRNA + (sulfur carrier)-SH + AH2 + 2 S-adenosyl-L-methionine = 2-methylsulfanyl-N(6)-dimethylallyladenosine(37) in tRNA + (sulfur carrier)-H + 5'-deoxyadenosine + L-methionine + A + S-adenosyl-L-homocysteine + 2 H(+). In terms of biological role, catalyzes the methylthiolation of N6-(dimethylallyl)adenosine (i(6)A), leading to the formation of 2-methylthio-N6-(dimethylallyl)adenosine (ms(2)i(6)A) at position 37 in tRNAs that read codons beginning with uridine. The polypeptide is tRNA-2-methylthio-N(6)-dimethylallyladenosine synthase (Herminiimonas arsenicoxydans).